The primary structure comprises 278 residues: tRNA(Phe) (4-demethylwyosine(37)-C(7)) aminocarboxypropyltransferase (278 aa).

Residues serine 109, arginine 116, glutamate 155, and 183 to 184 (DN) contribute to the S-adenosyl-L-methionine site.

It belongs to the class I-like SAM-binding methyltransferase superfamily. TRM5/TYW2 family.

The protein localises to the cytoplasm. The catalysed reaction is 4-demethylwyosine(37) in tRNA(Phe) + S-adenosyl-L-methionine = 4-demethyl-7-[(3S)-3-amino-3-carboxypropyl]wyosine(37) in tRNA(Phe) + S-methyl-5'-thioadenosine + H(+). S-adenosyl-L-methionine-dependent transferase that acts as a component of the wyosine derivatives biosynthesis pathway. Catalyzes the transfer of the alpha-amino-alpha-carboxypropyl (acp) group from S-adenosyl-L-methionine to 4-demethylwyosine (imG-14), forming 7-aminocarboxypropyl-demethylwyosine (wybutosine-86) at position 37 of tRNA(Phe). The sequence is that of tRNA(Phe) (4-demethylwyosine(37)-C(7)) aminocarboxypropyltransferase from Pyrococcus horikoshii (strain ATCC 700860 / DSM 12428 / JCM 9974 / NBRC 100139 / OT-3).